We begin with the raw amino-acid sequence, 234 residues long: Carboxy-S-adenosyl-L-methionine synthase (234 aa).

S-adenosyl-L-methionine is bound by residues Tyr35, 60–62 (GCS), 109–110 (DV), Asn124, and Arg191.

Belongs to the class I-like SAM-binding methyltransferase superfamily. Cx-SAM synthase family. As to quaternary structure, homodimer.

The catalysed reaction is prephenate + S-adenosyl-L-methionine = carboxy-S-adenosyl-L-methionine + 3-phenylpyruvate + H2O. Functionally, catalyzes the conversion of S-adenosyl-L-methionine (SAM) to carboxy-S-adenosyl-L-methionine (Cx-SAM). The chain is Carboxy-S-adenosyl-L-methionine synthase from Campylobacter curvus (strain 525.92).